Here is a 270-residue protein sequence, read N- to C-terminus: Splicing factor YJU2 (270 aa).

Residues 1–32 (MSERKVLNKYIPPDYDPSIRPPKKKKKFQGPN) are disordered. C48, C51, C84, and C87 together coordinate Zn(2+). The disordered stretch occupies residues 251–270 (PNFQPPKYAKRKMEKKKVLV). Over residues 258 to 270 (YAKRKMEKKKVLV) the composition is skewed to basic residues.

The protein belongs to the CWC16 family. YJU2 subfamily. As to quaternary structure, component of the spliceosome. Present in the activated B complex, the catalytically activated B* complex which catalyzes the branching, the catalytic step 1 C complex catalyzing the exon ligation, and the postcatalytic P complex containing the ligated exons (mRNA) and the excised lariat intron. Belongs to the 40S cdc5-associated complex (or cwf complex), a spliceosome sub-complex reminiscent of a late-stage spliceosome composed of the U2, U5 and U6 snRNAs and at least brr2, cdc5, cwf2/prp3, cwf3/syf1, cwf4/syf3, cwf5/ecm2, spp42/cwf6, cwf7/spf27, cwf8, cwf9, cwf10, cwf11, cwf12, prp45/cwf13, cwf14, cwf15, cwf16, cwf17, cwf18, cwf19, cwf20, cwf21, cwf22, cwf23, cwf24, cwf25, cwf26, cyp7/cwf27, cwf28, cwf29/ist3, lea1, msl1, prp5/cwf1, prp10, prp12/sap130, prp17, prp22, sap61, sap62, sap114, sap145, slu7, smb1, smd1, smd3, smf1, smg1 and syf2.

It is found in the nucleus. In terms of biological role, part of the spliceosome which catalyzes two sequential transesterification reactions, first the excision of the non-coding intron from pre-mRNA and then the ligation of the coding exons to form the mature mRNA. Plays a role in stabilizing the structure of the spliceosome catalytic core and docking of the branch helix into the active site, producing 5'-exon and lariat intron-3'-intermediates. In Schizosaccharomyces pombe (strain 972 / ATCC 24843) (Fission yeast), this protein is Splicing factor YJU2 (cwf16).